A 561-amino-acid chain; its full sequence is Potassium-transporting ATPase potassium-binding subunit (561 aa).

A run of 10 helical transmembrane segments spans residues 4–24, 65–85, 133–153, 177–197, 253–273, 285–305, 380–400, 417–437, 484–504, and 528–548; these read IVMQ…PLGI, AVSV…VLML, IGLT…LFAV, LYIL…QGVV, FTNL…VVMF, AIMT…TISE, GLYG…LLVG, MVCL…AVAV, MVGA…ALYL, and FIGL…LPAL.

The protein belongs to the KdpA family. In terms of assembly, the system is composed of three essential subunits: KdpA, KdpB and KdpC.

The protein localises to the cell membrane. Functionally, part of the high-affinity ATP-driven potassium transport (or Kdp) system, which catalyzes the hydrolysis of ATP coupled with the electrogenic transport of potassium into the cytoplasm. This subunit binds the extracellular potassium ions and delivers the ions to the membrane domain of KdpB through an intramembrane tunnel. This is Potassium-transporting ATPase potassium-binding subunit from Listeria monocytogenes serotype 4a (strain HCC23).